A 59-amino-acid polypeptide reads, in one-letter code: UPF0434 protein VIBHAR_01537 (59 aa).

The protein belongs to the UPF0434 family.

The polypeptide is UPF0434 protein VIBHAR_01537 (Vibrio campbellii (strain ATCC BAA-1116)).